The sequence spans 144 residues: MRKILLFATVIGFLIMVSGTLSYFYDVESQRSTFKSGHWASEIYPTVSFVKKESPVKIDFYGKPNEEYSYDVIFRIVDAPGIPKLSWDGDDFVQFSLRKNVNDWEVGMHLSPQTNGTYVGELTISYPSYPYKVVEIPVTITLEE.

The N-terminal stretch at 1–23 is a signal peptide; that stretch reads MRKILLFATVIGFLIMVSGTLSY.

This is an uncharacterized protein from Archaeoglobus fulgidus (strain ATCC 49558 / DSM 4304 / JCM 9628 / NBRC 100126 / VC-16).